Reading from the N-terminus, the 396-residue chain is Anhydro-N-acetylmuramic acid kinase (396 aa).

Residue 19 to 26 (GTSADGID) coordinates ATP.

Belongs to the anhydro-N-acetylmuramic acid kinase family.

It carries out the reaction 1,6-anhydro-N-acetyl-beta-muramate + ATP + H2O = N-acetyl-D-muramate 6-phosphate + ADP + H(+). It participates in amino-sugar metabolism; 1,6-anhydro-N-acetylmuramate degradation. It functions in the pathway cell wall biogenesis; peptidoglycan recycling. Functionally, catalyzes the specific phosphorylation of 1,6-anhydro-N-acetylmuramic acid (anhMurNAc) with the simultaneous cleavage of the 1,6-anhydro ring, generating MurNAc-6-P. Is required for the utilization of anhMurNAc either imported from the medium or derived from its own cell wall murein, and thus plays a role in cell wall recycling. The chain is Anhydro-N-acetylmuramic acid kinase from Colwellia psychrerythraea (strain 34H / ATCC BAA-681) (Vibrio psychroerythus).